The primary structure comprises 319 residues: Acetyl-coenzyme A carboxylase carboxyl transferase subunit alpha (319 aa).

The region spanning 35–296 (DLDKEIEQLE…KDMLVKQLEE (262 aa)) is the CoA carboxyltransferase C-terminal domain.

It belongs to the AccA family. Acetyl-CoA carboxylase is a heterohexamer composed of biotin carboxyl carrier protein (AccB), biotin carboxylase (AccC) and two subunits each of ACCase subunit alpha (AccA) and ACCase subunit beta (AccD).

It localises to the cytoplasm. It carries out the reaction N(6)-carboxybiotinyl-L-lysyl-[protein] + acetyl-CoA = N(6)-biotinyl-L-lysyl-[protein] + malonyl-CoA. It functions in the pathway lipid metabolism; malonyl-CoA biosynthesis; malonyl-CoA from acetyl-CoA: step 1/1. In terms of biological role, component of the acetyl coenzyme A carboxylase (ACC) complex. First, biotin carboxylase catalyzes the carboxylation of biotin on its carrier protein (BCCP) and then the CO(2) group is transferred by the carboxyltransferase to acetyl-CoA to form malonyl-CoA. This chain is Acetyl-coenzyme A carboxylase carboxyl transferase subunit alpha, found in Vibrio atlanticus (strain LGP32) (Vibrio splendidus (strain Mel32)).